Reading from the N-terminus, the 610-residue chain is Aspercryptin biosynthesis cluster-specific transcription regulator atnN (610 aa).

The segment covering 1-26 has biased composition (polar residues); it reads MAPKDSQVSASNEMTGNPPSSVQGRS. The segment at 1–27 is disordered; sequence MAPKDSQVSASNEMTGNPPSSVQGRSR. A DNA-binding region (zn(2)-C6 fungal-type) is located at residues 30 to 57; the sequence is CITCRIRRVKCDEERPHCRRCQSTGRKC. Disordered regions lie at residues 61 to 81 and 427 to 493; these read TPLT…KAGS and AGST…LPRP. Composition is skewed to low complexity over residues 66 to 79 and 437 to 474; these read QQPK…AAKA and SRAG…TPTP.

The protein localises to the nucleus. Functionally, transcription factor that positively regulates the cluster that mediate the production of aspercryptins, linear lipopeptides built from six amino acids including 2 highly unusual and nonproteogenic amino acids, 2-amino-octanoic acid (2aoa) and 2-amino-dodecanol (2adol). The sequence is that of Aspercryptin biosynthesis cluster-specific transcription regulator atnN from Emericella nidulans (strain FGSC A4 / ATCC 38163 / CBS 112.46 / NRRL 194 / M139) (Aspergillus nidulans).